A 34-amino-acid chain; its full sequence is Turripeptide OL127 (34 aa).

Post-translationally, contains 4 disulfide bonds. As to expression, expressed by the venom duct.

It is found in the secreted. In terms of biological role, acts as a neurotoxin by inhibiting an ion channel. In Iotyrris olangoensis (Sea snail), this protein is Turripeptide OL127.